The chain runs to 172 residues: ATP synthase subunit b (172 aa).

Residues 12–32 form a helical membrane-spanning segment; the sequence is SLYIGDLVFYIVTFIILMLLV. 2 stretches are compositionally biased toward basic and acidic residues: residues 63-74 and 116-131; these read ESAEKMAAKRQA and AQKD…LNSA. The segment at 63–131 is disordered; it reads ESAEKMAAKR…QARRDALNSA (69 aa).

The protein belongs to the ATPase B chain family. In terms of assembly, F-type ATPases have 2 components, F(1) - the catalytic core - and F(0) - the membrane proton channel. F(1) has five subunits: alpha(3), beta(3), gamma(1), delta(1), epsilon(1). F(0) has three main subunits: a(1), b(2) and c(10-14). The alpha and beta chains form an alternating ring which encloses part of the gamma chain. F(1) is attached to F(0) by a central stalk formed by the gamma and epsilon chains, while a peripheral stalk is formed by the delta and b chains.

It is found in the cell membrane. Functionally, f(1)F(0) ATP synthase produces ATP from ADP in the presence of a proton or sodium gradient. F-type ATPases consist of two structural domains, F(1) containing the extramembraneous catalytic core and F(0) containing the membrane proton channel, linked together by a central stalk and a peripheral stalk. During catalysis, ATP synthesis in the catalytic domain of F(1) is coupled via a rotary mechanism of the central stalk subunits to proton translocation. In terms of biological role, component of the F(0) channel, it forms part of the peripheral stalk, linking F(1) to F(0). The protein is ATP synthase subunit b of Limosilactobacillus reuteri (strain DSM 20016) (Lactobacillus reuteri).